Reading from the N-terminus, the 328-residue chain is Octanoyltransferase, mitochondrial (328 aa).

The BPL/LPL catalytic domain maps to 108–312 (MKPNPIILTF…EMTKLLGIKT (205 aa)). Substrate contacts are provided by residues 162–169 (RGGQVTFH), 241–243 (SVG), and 254–256 (GVA). Residue cysteine 272 is the Acyl-thioester intermediate of the active site.

It belongs to the LipB family.

Its subcellular location is the mitochondrion. It catalyses the reaction octanoyl-[ACP] + L-lysyl-[protein] = N(6)-octanoyl-L-lysyl-[protein] + holo-[ACP] + H(+). The protein operates within protein modification; protein lipoylation via endogenous pathway; protein N(6)-(lipoyl)lysine from octanoyl-[acyl-carrier-protein]: step 1/2. Its function is as follows. Catalyzes the transfer of endogenously produced octanoic acid from octanoyl-acyl-carrier-protein onto the lipoyl domains of lipoate-dependent enzymes. Lipoyl-ACP can also act as a substrate although octanoyl-ACP is likely to be the physiological substrate. The chain is Octanoyltransferase, mitochondrial (LIP2) from Saccharomyces cerevisiae (strain ATCC 204508 / S288c) (Baker's yeast).